The following is a 155-amino-acid chain: Small ribosomal subunit protein uS7c (155 aa).

The protein belongs to the universal ribosomal protein uS7 family. In terms of assembly, part of the 30S ribosomal subunit.

The protein localises to the plastid. It localises to the chloroplast. Its function is as follows. One of the primary rRNA binding proteins, it binds directly to 16S rRNA where it nucleates assembly of the head domain of the 30S subunit. In Euonymus alatus (Burning bush), this protein is Small ribosomal subunit protein uS7c (rps7).